A 500-amino-acid chain; its full sequence is Na(+)/H(+) antiporter NhaB (500 aa).

Helical transmembrane passes span 28-50, 68-88, 98-118, 121-141, 145-165, 205-225, 244-264, 311-331, 350-370, 394-414, 449-469, and 477-497; these read FLLL…VLVG, GGLL…ALYA, LLLM…LLLF, LLLG…LAAL, FLDA…FFAV, LLMH…VGEP, QVAP…VLLE, VLIV…LLVI, FQEA…VAVI, MLFI…VATI, VATP…IAPL, and MVWM…WAVS.

The protein belongs to the NhaB Na(+)/H(+) (TC 2.A.34) antiporter family.

Its subcellular location is the cell inner membrane. It carries out the reaction 2 Na(+)(in) + 3 H(+)(out) = 2 Na(+)(out) + 3 H(+)(in). Functionally, na(+)/H(+) antiporter that extrudes sodium in exchange for external protons. The sequence is that of Na(+)/H(+) antiporter NhaB from Pseudomonas aeruginosa (strain UCBPP-PA14).